Consider the following 536-residue polypeptide: MAGPSNQTQPPPPVLTQPSLSFTQGLLVGQLSVVLLIGAFIKFFIFGEAPPHPSRNGLSNRTSSHRRSYSLNSISADSSPRTLREKPSTSNILRPVPSSSTNTRSILRKTYYSATPTNPTSKHSRSRPHHSSHQPESLDWFNVLIAQTIAQYRQTAYILKDSPTSSILASLSEALNNPEKKPSFIDSIKVTDISLGEEFPIFSNCRVIAVEDPNSDGGRLQALMDVDLSDDNLSLAVETSLLLNYPKPFSAVLPVALAVSVVRFSGTLCISFVPGPGTSDQTMSPSPSPPKEASAENIAVDHQSPERQSARQRAPHQHKYTNTNTAGATAAATADDNDTHAKLPHGIPKTSLAFSFLPDYRLDLSVRSLIGSRSRLQDVPKVAQLVEARVQAWFEERVVEPRVQVVGLPNIWPRMGRTGVRGSQEETEAGAGGSAPADIPGTAGGDGVGVRGGGGGGGVGGSGGGSMRGTSGWGMGYDGLRYRHNAHGDGGVGAGPGQSAGAALYGGAQGGGGGGGRGGEEQFAIPGSMPDPVVVT.

Over 1-25 (MAGPSNQTQPPPPVLTQPSLSFTQG) the chain is Lumenal. A helical transmembrane segment spans residues 26–46 (LLVGQLSVVLLIGAFIKFFIF). Residues 47–536 (GEAPPHPSRN…GSMPDPVVVT (490 aa)) are Cytoplasmic-facing. 4 disordered regions span residues 52–135 (HPSR…SHQP), 275–331 (GPGT…ATAA), 416–467 (GRTG…GGSM), and 505–536 (YGGA…VVVT). Composition is skewed to polar residues over residues 69–81 (YSLN…SSPR), 88–105 (STSN…NTRS), and 112–121 (YSATPTNPTS). The segment covering 122-132 (KHSRSRPHHSS) has biased composition (basic residues). An SMP-LTD domain is found at 134–409 (QPESLDWFNV…EPRVQVVGLP (276 aa)). A compositionally biased stretch (low complexity) spans 321-331 (TNTNTAGATAA). 2 stretches are compositionally biased toward gly residues: residues 442–467 (TAGG…GGSM) and 507–517 (GAQGGGGGGGR).

This sequence belongs to the MMM1 family. In terms of assembly, homodimer. Component of the ER-mitochondria encounter structure (ERMES) or MDM complex, composed of MMM1, MDM10, MDM12 and MDM34. An MMM1 homodimer associates with one molecule of MDM12 on each side in a pairwise head-to-tail manner, and the SMP-LTD domains of MMM1 and MDM12 generate a continuous hydrophobic tunnel for phospholipid trafficking.

The protein resides in the endoplasmic reticulum membrane. Component of the ERMES/MDM complex, which serves as a molecular tether to connect the endoplasmic reticulum (ER) and mitochondria. Components of this complex are involved in the control of mitochondrial shape and protein biogenesis, and function in nonvesicular lipid trafficking between the ER and mitochondria. The MDM12-MMM1 subcomplex functions in the major beta-barrel assembly pathway that is responsible for biogenesis of all outer membrane beta-barrel proteins, and acts in a late step after the SAM complex. The MDM10-MDM12-MMM1 subcomplex further acts in the TOM40-specific pathway after the action of the MDM12-MMM1 complex. Essential for establishing and maintaining the structure of mitochondria and maintenance of mtDNA nucleoids. The protein is Maintenance of mitochondrial morphology protein 1 of Ajellomyces dermatitidis (strain ER-3 / ATCC MYA-2586) (Blastomyces dermatitidis).